Here is a 129-residue protein sequence, read N- to C-terminus: uncharacterized protein (129 aa).

A disordered region spans residues 34-57 (SAPLRPPRELHAAPPPATPTQTVV).

This is an uncharacterized protein from Homo sapiens (Human).